The following is a 209-amino-acid chain: Large ribosomal subunit protein uL4 (209 aa).

The tract at residues 50-89 is disordered; sequence MTKTKGLVSGGGKKPFKQKGTGGARQGSSRSILMPGGGTA.

It belongs to the universal ribosomal protein uL4 family. Part of the 50S ribosomal subunit.

Its function is as follows. One of the primary rRNA binding proteins, this protein initially binds near the 5'-end of the 23S rRNA. It is important during the early stages of 50S assembly. It makes multiple contacts with different domains of the 23S rRNA in the assembled 50S subunit and ribosome. Forms part of the polypeptide exit tunnel. This Bdellovibrio bacteriovorus (strain ATCC 15356 / DSM 50701 / NCIMB 9529 / HD100) protein is Large ribosomal subunit protein uL4.